The sequence spans 140 residues: MSRFLNVLRSWLVMVSIIAMGNTLQSFRDHTFLYEKLYTGKPNLVNGLQARTFGIWTLLSSVIRCLCAIDIHNKTLYHITLWTFLLALGHFLSELFVFGTAAPTVGVLAPLMVASFSILGMLVGLRYLEAEPVSRQKKRN.

Helical transmembrane passes span 4–24 (FLNVLRSWLVMVSIIAMGNTL), 52–72 (TFGIWTLLSSVIRCLCAIDIH), 79–99 (ITLWTFLLALGHFLSELFVFG), and 105–125 (VGVLAPLMVASFSILGMLVGL).

This sequence belongs to the ERG28 family.

The protein localises to the endoplasmic reticulum membrane. The protein is Ergosterol biosynthetic protein 28 homolog of Mus musculus (Mouse).